The primary structure comprises 101 residues: Apolipoprotein C-II (101 aa).

The first 22 residues, Met-1–Gly-22, serve as a signal peptide directing secretion. A lipid binding region spans residues Thr-66–Met-74. The segment at Ser-78–Glu-101 is lipoprotein lipase cofactor.

It belongs to the apolipoprotein C2 family. In terms of processing, proapolipoprotein C-II is synthesized as a sialic acid containing glycoprotein which is subsequently desialylated prior to its proteolytic processing. Proapolipoprotein C-II, the major form found in plasma undergoes proteolytic cleavage of its N-terminal hexapeptide to generate apolipoprotein C-II, which occurs as the minor form in plasma.

The protein resides in the secreted. Functionally, component of chylomicrons, very low-density lipoproteins (VLDL), low-density lipoproteins (LDL), and high-density lipoproteins (HDL) in plasma. Plays an important role in lipoprotein metabolism as an activator of lipoprotein lipase. Both proapolipoprotein C-II and apolipoprotein C-II can activate lipoprotein lipase. This Plecturocebus moloch (Dusky titi monkey) protein is Apolipoprotein C-II (APOC2).